The primary structure comprises 270 residues: Formamidopyrimidine-DNA glycosylase (270 aa).

Residue Pro2 is the Schiff-base intermediate with DNA of the active site. Residue Glu3 is the Proton donor of the active site. Lys58 functions as the Proton donor; for beta-elimination activity in the catalytic mechanism. His91, Arg110, and Arg151 together coordinate DNA. The segment at 236-270 adopts an FPG-type zinc-finger fold; the sequence is RVYDREDAPCRRCATPIRRIVQAQRASFYCPTCQR. Arg260 (proton donor; for delta-elimination activity) is an active-site residue.

Belongs to the FPG family. As to quaternary structure, monomer. It depends on Zn(2+) as a cofactor.

The enzyme catalyses Hydrolysis of DNA containing ring-opened 7-methylguanine residues, releasing 2,6-diamino-4-hydroxy-5-(N-methyl)formamidopyrimidine.. The catalysed reaction is 2'-deoxyribonucleotide-(2'-deoxyribose 5'-phosphate)-2'-deoxyribonucleotide-DNA = a 3'-end 2'-deoxyribonucleotide-(2,3-dehydro-2,3-deoxyribose 5'-phosphate)-DNA + a 5'-end 5'-phospho-2'-deoxyribonucleoside-DNA + H(+). In terms of biological role, involved in base excision repair of DNA damaged by oxidation or by mutagenic agents. Acts as a DNA glycosylase that recognizes and removes damaged bases. Has a preference for oxidized purines, such as 7,8-dihydro-8-oxoguanine (8-oxoG). Has AP (apurinic/apyrimidinic) lyase activity and introduces nicks in the DNA strand. Cleaves the DNA backbone by beta-delta elimination to generate a single-strand break at the site of the removed base with both 3'- and 5'-phosphates. The polypeptide is Formamidopyrimidine-DNA glycosylase (Thiobacillus denitrificans (strain ATCC 25259 / T1)).